Reading from the N-terminus, the 216-residue chain is Cytidylate kinase (216 aa).

Position 7-15 (7-15 (GPSGTGKST)) interacts with ATP.

This sequence belongs to the cytidylate kinase family. Type 1 subfamily.

It is found in the cytoplasm. The catalysed reaction is CMP + ATP = CDP + ADP. It catalyses the reaction dCMP + ATP = dCDP + ADP. This is Cytidylate kinase from Chlamydia felis (strain Fe/C-56) (Chlamydophila felis).